The following is a 214-amino-acid chain: Urease accessory protein UreF (214 aa).

This sequence belongs to the UreF family. As to quaternary structure, ureD, UreF and UreG form a complex that acts as a GTP-hydrolysis-dependent molecular chaperone, activating the urease apoprotein by helping to assemble the nickel containing metallocenter of UreC. The UreE protein probably delivers the nickel.

The protein localises to the cytoplasm. Functionally, required for maturation of urease via the functional incorporation of the urease nickel metallocenter. The chain is Urease accessory protein UreF from Ruegeria sp. (strain TM1040) (Silicibacter sp.).